The chain runs to 396 residues: Schizokinen exporter SchE (396 aa).

Positions 1-25 are cleaved as a signal peptide; sequence MLPKLILLATLYISQFIPTTFFIQA. Topologically, residues 26-39 are cytoplasmic; sequence LPVFMRQQKMSLDV. The helical transmembrane segment at 40-60 threads the bilayer; sequence IGFLGLLILPSGLKFLWSPFI. Over 61–73 the chain is Periplasmic; that stretch reads DRYRLGKLGHYRG. A helical transmembrane segment spans residues 74–94; that stretch reads WIICFQLLLISTMLVTAFIDI. At 95–104 the chain is on the cytoplasmic side; the sequence is QDNLNAFLTC. The chain crosses the membrane as a helical span at residues 105-127; the sequence is MFLASLFSSSQDIATDALAVNLL. Residues 128–137 are Periplasmic-facing; it reads EPQERGLGNA. A helical membrane pass occupies residues 138–158; sequence IQSGGNIFGAIIGGGVMLILL. Topologically, residues 159–162 are cytoplasmic; the sequence is DKIG. The chain crosses the membrane as a helical span at residues 163–183; sequence WRYSLITLSIFMLINLVPILI. Residues 184-214 lie on the Periplasmic side of the membrane; the sequence is YREKSQHQLENSTFFRSYFQPFISFLSRPKA. Residues 215-235 form a helical membrane-spanning segment; the sequence is LPWLFVVLLYMMGDSVTSLMI. Residues 236–251 are Cytoplasmic-facing; the sequence is RPLLVDRGLSLPDIGW. A helical membrane pass occupies residues 252–272; the sequence is ILGIVSYSARIVSALIAGLVI. Topologically, residues 273–281 are periplasmic; that stretch reads VKLGRIKSL. Residues 282–302 traverse the membrane as a helical segment; sequence IIFGFIADLTTLLYIIPAIGV. The Cytoplasmic portion of the chain corresponds to 303–304; that stretch reads SS. Residues 305 to 325 traverse the membrane as a helical segment; the sequence is LLVLYTVCIIVNATQSMAYTA. Residues 326–346 lie on the Periplasmic side of the membrane; the sequence is LLSAMMDKCEKNTAATDYTMQ. A run of 2 helical transmembrane segments spans residues 347 to 367 and 368 to 388; these read VSVM…LATT and MGYS…VFLI. Topologically, residues 389–396 are periplasmic; the sequence is TQEYGVSS.

This sequence belongs to the major facilitator superfamily.

It is found in the cell inner membrane. Functionally, involved in the TolC-like protein HgdD-dependent secretion of schizokinen, a dihydroxamate-type siderophore. Transports schizokinen from the cytoplasm to the periplasm. The polypeptide is Schizokinen exporter SchE (Nostoc sp. (strain PCC 7120 / SAG 25.82 / UTEX 2576)).